Reading from the N-terminus, the 579-residue chain is Effector protein HopAB3 (579 aa).

Disordered stretches follow at residues 1-140 (MAGI…TGAV), 214-294 (VRQQ…NQVP), and 384-408 (PARA…PDSA). Residues 1 to 336 (MAGINGAGPS…LRAALERHIL (336 aa)) form a host recognition; Pto interaction region. Composition is skewed to low complexity over residues 23 to 39 (ASGG…SSNS), 89 to 101 (RPQE…APQA), 219 to 248 (ASAP…ESSS), 266 to 281 (NQRR…ASQR), and 384 to 402 (PARA…ATVS). The segment at 337–579 (HRRPIPMDIA…IAKYAFRIVP (243 aa)) is E3 ubiquitin-protein ligase.

It belongs to the HopAB family. As to quaternary structure, interacts physically with plant cell Pto. In terms of processing, auto-ubiquitinated.

The protein localises to the secreted. Its function is as follows. Effector protein involved in gene-for-gene resistance in tomato plants. It is recognized by the host Pto resistance protein and elicits Pto and Prf-dependent hypersensitive response (HR) and programmed cell death (PCD), resulting in host immunity. In susceptible plants, acts as a virulence factor by suppressing PCD and HR-based plant immunity. This function requires its E3 ubiquitin ligase activity probably by recruiting E2 enzymes and transferring ubiquitin molecules to cellular proteins involved in regulation of PCD and targeting them for degradation. Enhances the development of disease symptoms and bacterial growth. This Pseudomonas syringae pv. tomato protein is Effector protein HopAB3 (hopAB3).